Reading from the N-terminus, the 526-residue chain is Delayed-rectifier potassium channel regulatory subunit KCNS1 (526 aa).

The Cytoplasmic segment spans residues 1–217; the sequence is MLMLLVRGTH…LTMENPGYSL (217 aa). Residues 218–239 form a helical membrane-spanning segment; sequence PSKLFSCVSISVVLASIAAMCI. The Extracellular segment spans residues 240-270; that stretch reads HSLPEYQAREAAAAVAAVAAGRSPEGVRDDP. The chain crosses the membrane as a helical span at residues 271-293; the sequence is VLRRLEYFCIAWFSFEVSSRLLL. Topologically, residues 294-304 are cytoplasmic; that stretch reads APSTRNFFCHP. A helical transmembrane segment spans residues 305–322; it reads LNLIDIVSVLPFYLTLLA. The Extracellular portion of the chain corresponds to 323 to 337; it reads GVALGDQGGKEFGHL. The helical; Voltage-sensor transmembrane segment at 338–358 threads the bilayer; sequence GKVVQVFRLMRIFRVLKLARH. Residues 359 to 373 are Cytoplasmic-facing; the sequence is STGLRSLGATLKHSY. Residues 374 to 395 traverse the membrane as a helical segment; that stretch reads REVGILLLYLAVGVSVFSGVAY. The Extracellular segment spans residues 396 to 408; it reads TAEKEEDVGFNTI. The segment at residues 409 to 420 is an intramembrane region (helical); that stretch reads PACWWWGTVSMT. The short motif at 421–426 is the Selectivity filter element; sequence TVGYGD. An intramembrane segment occupies 421 to 428; sequence TVGYGDVV. Residues 429–435 lie on the Extracellular side of the membrane; sequence PVTVAGK. A helical transmembrane segment spans residues 436 to 464; the sequence is LAASGCILGGILVVALPITIIFNKFSHFY. The Cytoplasmic segment spans residues 465 to 526; sequence RRQKALEAAV…PSEPPHPQMY (62 aa). The interval 491-526 is disordered; it reads GVSEASLETSRETSQEGRSADLESQAPSEPPHPQMY. Residues 499-511 show a composition bias toward basic and acidic residues; the sequence is TSRETSQEGRSAD.

It belongs to the potassium channel family. S (TC 1.A.1.2) subfamily. Kv9.1/KCNS1 sub-subfamily. Heterotetramer with KCNB1. Heterotetramer with KCNB2. Does not form homomultimers.

It localises to the cell membrane. Its function is as follows. Potassium channel regulatory subunit that modulate the delayed rectifier voltage-gated potassium channel activity of KCNB1 and KCNB2 by altering their kinetics, expression levels, and shifting the half-inactivation potential to more polarized values. While it does not form functional channels on its own, it can form functional heterotetrameric channels with KCNB1 and KCNB2. Each regulatory subunit has unique regulatory properties that can lead to extensive inhibition, significant changes in kinetics, and/or substantial shifts in the voltage dependencies of the inactivation process. The sequence is that of Delayed-rectifier potassium channel regulatory subunit KCNS1 from Pongo abelii (Sumatran orangutan).